Here is a 229-residue protein sequence, read N- to C-terminus: Putative germin-like protein 12-4 (229 aa).

The first 22 residues, 1-22 (MAASNFFLLTAFIALVATQAMA), serve as a signal peptide directing secretion. Cys32 and Cys47 are disulfide-bonded. The region spanning 62–217 (ANLDKPMDTT…AFQVDKKAMD (156 aa)) is the Cupin type-1 domain. Residue Asn78 is glycosylated (N-linked (GlcNAc...) asparagine). Residues His111, His113, Glu118, and His162 each coordinate Mn(2+).

This sequence belongs to the germin family. In terms of assembly, oligomer (believed to be a pentamer but probably hexamer).

The protein resides in the secreted. Its subcellular location is the extracellular space. It is found in the apoplast. Its function is as follows. May play a role in plant defense. Probably has no oxalate oxidase activity even if the active site is conserved. This is Putative germin-like protein 12-4 from Oryza sativa subsp. japonica (Rice).